A 318-amino-acid polypeptide reads, in one-letter code: UPF0725 protein At3g44770 (318 aa).

The protein belongs to the UPF0725 (EMB2204) family.

This is UPF0725 protein At3g44770 from Arabidopsis thaliana (Mouse-ear cress).